Here is an 87-residue protein sequence, read N- to C-terminus: Small ribosomal subunit protein bS18 (87 aa).

Residues 1-20 show a composition bias toward basic and acidic residues; sequence MAGKSSGDRRKPIRKGKDGK. A disordered region spans residues 1-24; sequence MAGKSSGDRRKPIRKGKDGKNAAP.

This sequence belongs to the bacterial ribosomal protein bS18 family. In terms of assembly, part of the 30S ribosomal subunit. Forms a tight heterodimer with protein bS6.

Its function is as follows. Binds as a heterodimer with protein bS6 to the central domain of the 16S rRNA, where it helps stabilize the platform of the 30S subunit. This chain is Small ribosomal subunit protein bS18, found in Leifsonia xyli subsp. xyli (strain CTCB07).